The sequence spans 240 residues: Proteasome subunit alpha (240 aa).

The protein belongs to the peptidase T1A family. In terms of assembly, the 20S proteasome core is composed of 14 alpha and 14 beta subunits that assemble into four stacked heptameric rings, resulting in a barrel-shaped structure. The two inner rings, each composed of seven catalytic beta subunits, are sandwiched by two outer rings, each composed of seven alpha subunits. The catalytic chamber with the active sites is on the inside of the barrel. Has a gated structure, the ends of the cylinder being occluded by the N-termini of the alpha-subunits. Is capped at one or both ends by the proteasome regulatory ATPase, PAN.

It localises to the cytoplasm. With respect to regulation, the formation of the proteasomal ATPase PAN-20S proteasome complex, via the docking of the C-termini of PAN into the intersubunit pockets in the alpha-rings, triggers opening of the gate for substrate entry. Interconversion between the open-gate and close-gate conformations leads to a dynamic regulation of the 20S proteasome proteolysis activity. In terms of biological role, component of the proteasome core, a large protease complex with broad specificity involved in protein degradation. The chain is Proteasome subunit alpha from Methanoculleus marisnigri (strain ATCC 35101 / DSM 1498 / JR1).